We begin with the raw amino-acid sequence, 303 residues long: D-alanine--D-alanine ligase (303 aa).

The region spanning 104-300 (KLLWNAVGLP…FEKLVERVLE (197 aa)) is the ATP-grasp domain. Residue 132 to 187 (IAKLSLPVFVKPSSEGSSVGVFKVKTKEELLPAITAALEFDTIVLVEEFLTGAEYS) coordinates ATP. Aspartate 254, glutamate 267, and asparagine 269 together coordinate Mg(2+).

The protein belongs to the D-alanine--D-alanine ligase family. The cofactor is Mg(2+). It depends on Mn(2+) as a cofactor.

Its subcellular location is the cytoplasm. The enzyme catalyses 2 D-alanine + ATP = D-alanyl-D-alanine + ADP + phosphate + H(+). It functions in the pathway cell wall biogenesis; peptidoglycan biosynthesis. Its function is as follows. Cell wall formation. The protein is D-alanine--D-alanine ligase of Haemophilus ducreyi (strain 35000HP / ATCC 700724).